Here is a 276-residue protein sequence, read N- to C-terminus: Diaminopimelate epimerase (276 aa).

3 residues coordinate substrate: asparagine 13, glutamine 46, and asparagine 66. Cysteine 75 functions as the Proton donor in the catalytic mechanism. Residues 76–77 (GN), asparagine 159, asparagine 192, and 210–211 (ER) each bind substrate. Cysteine 219 functions as the Proton acceptor in the catalytic mechanism. 220–221 (GT) is a substrate binding site.

This sequence belongs to the diaminopimelate epimerase family. Homodimer.

The protein resides in the cytoplasm. It carries out the reaction (2S,6S)-2,6-diaminopimelate = meso-2,6-diaminopimelate. Its pathway is amino-acid biosynthesis; L-lysine biosynthesis via DAP pathway; DL-2,6-diaminopimelate from LL-2,6-diaminopimelate: step 1/1. Functionally, catalyzes the stereoinversion of LL-2,6-diaminopimelate (L,L-DAP) to meso-diaminopimelate (meso-DAP), a precursor of L-lysine and an essential component of the bacterial peptidoglycan. In Cellvibrio japonicus (strain Ueda107) (Pseudomonas fluorescens subsp. cellulosa), this protein is Diaminopimelate epimerase.